The primary structure comprises 623 residues: Arginine decarboxylase 2 (623 aa).

Lys109 carries the post-translational modification N6-(pyridoxal phosphate)lysine. Residue 295–305 (LDCGGGLGVDY) coordinates substrate.

Belongs to the Orn/Lys/Arg decarboxylase class-II family. SpeA subfamily. Requires pyridoxal 5'-phosphate as cofactor. Mg(2+) serves as cofactor. In terms of tissue distribution, expressed in stems (at protein level).

It carries out the reaction L-arginine + H(+) = agmatine + CO2. The protein operates within amine and polyamine biosynthesis; agmatine biosynthesis; agmatine from L-arginine: step 1/1. In Oryza sativa subsp. japonica (Rice), this protein is Arginine decarboxylase 2 (ADC2).